We begin with the raw amino-acid sequence, 247 residues long: UPF0309 protein LMOf2365_2617 (247 aa).

The region spanning 31-214 (VAESIENDGV…ETMVNDNFTP (184 aa)) is the SIS domain.

Belongs to the UPF0309 family.

This Listeria monocytogenes serotype 4b (strain F2365) protein is UPF0309 protein LMOf2365_2617.